A 241-amino-acid polypeptide reads, in one-letter code: Glutathione S-transferase omega-1 (241 aa).

At Ser2 the chain carries N-acetylserine. The GST N-terminal domain maps to 22-101 (GSIRIYSMRF…YLDEAYPGKK (80 aa)). Residue Cys32 is the Nucleophile of the active site. Position 57 is an N6-acetyllysine (Lys57). Residues Lys59, Val72, and 85–86 (ES) each bind glutathione. The GST C-terminal domain maps to 106–230 (DPYEKACQKM…DWQGFLELYL (125 aa)). A Phosphoserine modification is found at Ser129. Lys143, Lys148, and Lys152 each carry N6-acetyllysine.

Belongs to the GST superfamily. Omega family. Homodimer. In terms of tissue distribution, ubiquitous. Highest expression in liver, pancreas, skeletal muscle, spleen, thymus, colon, blood leukocyte and heart. Lowest expression in brain, placenta and lung.

It localises to the cytoplasm. Its subcellular location is the cytosol. It carries out the reaction RX + glutathione = an S-substituted glutathione + a halide anion + H(+). The enzyme catalyses L-dehydroascorbate + 2 glutathione = glutathione disulfide + L-ascorbate. It catalyses the reaction methylarsonate + 2 glutathione + H(+) = methylarsonous acid + glutathione disulfide + H2O. With respect to regulation, monomethylarsonic acid reductase activity is competitively inhibited by 1-chloro 2,4-dinitrobenzene (CDNB) and by deoxycholate. Exhibits glutathione-dependent thiol transferase and dehydroascorbate reductase activities. Has S-(phenacyl)glutathione reductase activity. Also has glutathione S-transferase activity. Participates in the biotransformation of inorganic arsenic and reduces monomethylarsonic acid (MMA) and dimethylarsonic acid. The chain is Glutathione S-transferase omega-1 (GSTO1) from Homo sapiens (Human).